The primary structure comprises 211 residues: Ribosomal RNA small subunit methyltransferase G (211 aa).

S-adenosyl-L-methionine-binding positions include Gly73, 126–127 (IE), and Arg142.

Belongs to the methyltransferase superfamily. RNA methyltransferase RsmG family.

The protein resides in the cytoplasm. The catalysed reaction is guanosine(527) in 16S rRNA + S-adenosyl-L-methionine = N(7)-methylguanosine(527) in 16S rRNA + S-adenosyl-L-homocysteine. Specifically methylates the N7 position of guanine in position 527 of 16S rRNA. This is Ribosomal RNA small subunit methyltransferase G from Methylorubrum populi (strain ATCC BAA-705 / NCIMB 13946 / BJ001) (Methylobacterium populi).